Consider the following 285-residue polypeptide: MLFNAVHNSLPPNIDIDHAILRGEDHPPTCAKCVARVRISALGSLDLRYHSLRCYAAPPDVGRCEFVPPRRRVLIANQGLDVSRLPPTGTVTLLLADVEESTHLWQMCPEDMATAIAHLDHTVSEAITNHGGVQPVKRYEGDSFVAAFTRASDAAACALDLQRTSLAPIRLRIGLHTGEVQLRDELYVGPTINRTARLRDLAHGGQVVLSAATGDLVTGRLPADAWLVDLGRHPLRGLPRPEWVMQLCHPDIREKFPPLRTAKSSPTSILPAQFTTFVGRRAQIS.

The Guanylate cyclase domain occupies 92–199 (TLLLADVEES…PTINRTARLR (108 aa)).

This sequence belongs to the adenylyl cyclase class-4/guanylyl cyclase family.

This is an uncharacterized protein from Mycobacterium tuberculosis (strain ATCC 25618 / H37Rv).